A 321-amino-acid chain; its full sequence is Phospholipid phosphatase-related protein type 5 (321 aa).

6 helical membrane passes run 10–30, 62–82, 122–142, 196–213, 225–245, and 252–272; these read SSML…AYYF, AVPP…VIIV, FLGI…AGQV, AALS…ITNT, VLCL…VAEY, and VIAG…CVVN.

It belongs to the PA-phosphatase related phosphoesterase family. Isoform 1 is expressed in brain, lung, kidney and colon. Isoform 2 is expressed in placenta, skeletal muscle and kidney.

The protein localises to the cell membrane. In terms of biological role, induces filopodia formation and promotes neurite growth in a CDC42-independent manner; impedes neurite growth inhibitory-mediated axonal retraction. This chain is Phospholipid phosphatase-related protein type 5, found in Homo sapiens (Human).